A 550-amino-acid polypeptide reads, in one-letter code: Methionine--tRNA ligase (550 aa).

Residues 14-24 (PYANGSLHIGH) carry the 'HIGH' region motif. Positions 145, 148, 158, and 161 each coordinate Zn(2+). Positions 331–335 (KMSKS) match the 'KMSKS' region motif. Residue lysine 334 coordinates ATP.

The protein belongs to the class-I aminoacyl-tRNA synthetase family. MetG type 1 subfamily. As to quaternary structure, monomer. Zn(2+) is required as a cofactor.

It is found in the cytoplasm. The catalysed reaction is tRNA(Met) + L-methionine + ATP = L-methionyl-tRNA(Met) + AMP + diphosphate. Its function is as follows. Is required not only for elongation of protein synthesis but also for the initiation of all mRNA translation through initiator tRNA(fMet) aminoacylation. The polypeptide is Methionine--tRNA ligase (Wigglesworthia glossinidia brevipalpis).